Consider the following 253-residue polypeptide: Dihydroanticapsin 7-dehydrogenase (253 aa).

Residue 9–31 (LITGGASGIGYAAVQAFLGQQAN) participates in NAD(+) binding. Serine 139 contacts substrate. Catalysis depends on tyrosine 152, which acts as the Proton acceptor.

Belongs to the short-chain dehydrogenases/reductases (SDR) family.

It catalyses the reaction L-dihydroanticapsin + NAD(+) = L-anticapsin + NADH + H(+). Its pathway is antibiotic biosynthesis; bacilysin biosynthesis. In terms of biological role, part of the bacABCDEFG operon responsible for the biosynthesis of bacilysin, an irreversible inactivator of the glutaminase domain of glucosamine synthetase. Catalyzes the dehydrogenation of the C7-hydroxyl group in the 4S-tetrahydrotyrosine (4S-H4Tyr) to yield anticapsin (epoxycyclohexanonyl-Ala). It is not able to oxidize the 4R-H4Tyr diastereomer and the dihydrobacilysin dipeptide (L-Ala-4S-H4Tyr dipeptide). This is Dihydroanticapsin 7-dehydrogenase from Bacillus subtilis (strain 168).